We begin with the raw amino-acid sequence, 319 residues long: Protein sprouty homolog 1 (319 aa).

An N-acetylmethionine modification is found at Met-1. Disordered regions lie at residues 54–78 (TEGP…ERTH) and 100–160 (AVLP…QPKQ). A compositionally biased stretch (basic and acidic residues) spans 69–78 (PRQEKHERTH). The span at 112 to 131 (SRSTSTGSAASSGSNSSASS) shows a compositional bias: low complexity. Residues 183–295 (QCGKCKCGEC…CYDWIHRPGC (113 aa)) enclose the SPR domain.

It belongs to the sprouty family. Forms heterodimers with SPRY2. Interacts with TESK1. Interacts with CAV1 (via C-terminus).

Its subcellular location is the cytoplasm. It is found in the membrane. Inhibits fibroblast growth factor (FGF)-induced retinal lens fiber differentiation, probably by inhibiting FGF-mediated phosphorylation of ERK1/2. Inhibits TGFB-induced epithelial-to-mesenchymal transition in lens epithelial cells. This chain is Protein sprouty homolog 1 (SPRY1), found in Homo sapiens (Human).